Here is a 907-residue protein sequence, read N- to C-terminus: Protein translocase subunit SecA (907 aa).

ATP is bound by residues Q87, 105–109, and D510; that span reads GEGKT. Zn(2+) is bound by residues C892, C894, C903, and H904.

It belongs to the SecA family. As to quaternary structure, monomer and homodimer. Part of the essential Sec protein translocation apparatus which comprises SecA, SecYEG and auxiliary proteins SecDF-YajC and YidC. The cofactor is Zn(2+).

The protein resides in the cell inner membrane. It localises to the cytoplasm. The enzyme catalyses ATP + H2O + cellular proteinSide 1 = ADP + phosphate + cellular proteinSide 2.. Functionally, part of the Sec protein translocase complex. Interacts with the SecYEG preprotein conducting channel. Has a central role in coupling the hydrolysis of ATP to the transfer of proteins into and across the cell membrane, serving both as a receptor for the preprotein-SecB complex and as an ATP-driven molecular motor driving the stepwise translocation of polypeptide chains across the membrane. The protein is Protein translocase subunit SecA of Acinetobacter baumannii (strain ACICU).